Reading from the N-terminus, the 257-residue chain is Protein-tyrosine-phosphatase IBR5 (257 aa).

In terms of domain architecture, Tyrosine-protein phosphatase spans 49–185 (FPSEILPEFL…LQEFEQGIFG (137 aa)). Cysteine 129 serves as the catalytic Phosphocysteine intermediate. Residues 235 to 257 (QEFTFGATPPKPTTGGDIAMDGS) form a disordered region.

It belongs to the protein-tyrosine phosphatase family. Interacts with SKP1A/ASK1 and with MPK12. As to expression, expressed in root tips and vasculature, cotyledons, stems, leaves vasculature and hydathodes, flowers, siliques, and seeds.

Its subcellular location is the nucleus. It catalyses the reaction O-phospho-L-tyrosyl-[protein] + H2O = L-tyrosyl-[protein] + phosphate. In terms of biological role, required for the transduction of auxin and abscisic acid (ABA) signaling pathways. Dephosphorylates and inactivates the MAP kinase MPK12. The chain is Protein-tyrosine-phosphatase IBR5 (IBR5) from Arabidopsis thaliana (Mouse-ear cress).